The primary structure comprises 134 residues: ATP synthase epsilon chain (134 aa).

Belongs to the ATPase epsilon chain family. F-type ATPases have 2 components, CF(1) - the catalytic core - and CF(0) - the membrane proton channel. CF(1) has five subunits: alpha(3), beta(3), gamma(1), delta(1), epsilon(1). CF(0) has three main subunits: a, b and c.

Its subcellular location is the cell membrane. Functionally, produces ATP from ADP in the presence of a proton gradient across the membrane. The chain is ATP synthase epsilon chain from Listeria innocua serovar 6a (strain ATCC BAA-680 / CLIP 11262).